The following is a 375-amino-acid chain: Chaperone protein DnaJ (375 aa).

Positions 5-70 constitute a J domain; sequence DYYEILGVSK…QKRAAYDQYG (66 aa). A CR-type zinc finger spans residues 130-208; sequence GVTKEIRIPT…CHGHGRVEKS (79 aa). Residues Cys-143, Cys-146, Cys-160, Cys-163, Cys-182, Cys-185, Cys-196, and Cys-199 each coordinate Zn(2+). CXXCXGXG motif repeat units lie at residues 143-150, 160-167, 182-189, and 196-203; these read CDVCHGSG, CPTCHGSG, CPHCQGRG, and CHKCHGHG.

The protein belongs to the DnaJ family. As to quaternary structure, homodimer. It depends on Zn(2+) as a cofactor.

It localises to the cytoplasm. Its function is as follows. Participates actively in the response to hyperosmotic and heat shock by preventing the aggregation of stress-denatured proteins and by disaggregating proteins, also in an autonomous, DnaK-independent fashion. Unfolded proteins bind initially to DnaJ; upon interaction with the DnaJ-bound protein, DnaK hydrolyzes its bound ATP, resulting in the formation of a stable complex. GrpE releases ADP from DnaK; ATP binding to DnaK triggers the release of the substrate protein, thus completing the reaction cycle. Several rounds of ATP-dependent interactions between DnaJ, DnaK and GrpE are required for fully efficient folding. Also involved, together with DnaK and GrpE, in the DNA replication of plasmids through activation of initiation proteins. The protein is Chaperone protein DnaJ of Salmonella paratyphi A (strain ATCC 9150 / SARB42).